A 422-amino-acid polypeptide reads, in one-letter code: 2-oxoglutarate and iron-dependent oxygenase JMJD4 (422 aa).

The region spanning 139–298 is the JmjC domain; it reads QRNFPEHNIY…IMWQFLQDEL (160 aa). Fe cation is bound by residues His186, Asp188, and His266.

It belongs to the JMJD6 family. It depends on Fe(2+) as a cofactor.

Its subcellular location is the cytoplasm. It carries out the reaction L-lysyl-[protein] + 2-oxoglutarate + O2 = 4-hydroxy-L-lysyl-[protein] + succinate + CO2. Catalyzes the 2-oxoglutarate and iron-dependent C4-lysyl hydroxylation of ETF1 at 'Lys-63' thereby promoting the translational termination efficiency of ETF1. The polypeptide is 2-oxoglutarate and iron-dependent oxygenase JMJD4 (jmjd4) (Danio rerio (Zebrafish)).